A 1106-amino-acid chain; its full sequence is Protein transport protein Sec31A (1106 aa).

WD repeat units follow at residues 4–47 (KEVD…EIFE), 68–111 (RYHK…AGDK), 120–160 (KHTG…TPMT), 166–206 (QPPE…PIIK), 209–254 (DHSN…SPLR), 258–298 (NHAR…VLYE), and 301–342 (TNTQ…DGLR). Positions 161–471 (PGAKTQPPED…IDASQTEFEK (311 aa)) are interaction with SEC13. One copy of the WD 8; interaction with SEC13 repeat lies at 397 to 430 (SFSFGGKLVTFENVRMPSHQGAEQQQQQHHVFIS). Phosphoserine is present on residues Ser-527 and Ser-532. Residue Lys-647 forms a Glycyl lysine isopeptide (Lys-Gly) (interchain with G-Cter in ubiquitin) linkage. Ser-799 carries the post-translational modification Phosphoserine. The interaction with PDCD6 stretch occupies residues 800-999 (PKIPYEEQQL…TKKITKKPIP (200 aa)). The ALG-2-binding site motif-2 (ABS-2) motif lies at 842-848 (GFIMHGN). The interval 859 to 980 (TSPGHMHTQV…EGAPGAPIGN (122 aa)) is disordered. A compositionally biased stretch (polar residues) spans 917–939 (PQSQMLQQQPSAPVPLSSQSSFP). Thr-1047 carries the post-translational modification Phosphothreonine. Phosphoserine is present on Ser-1049. Residue Lys-1103 forms a Glycyl lysine isopeptide (Lys-Gly) (interchain with G-Cter in ubiquitin) linkage.

It belongs to the WD repeat SEC31 family. In terms of assembly, COPII is composed of at least 5 proteins: the SEC23/24 complex, the SEC13/31 complex and SAR1. SEC13 and SEC31 make a 2:2 tetramer that forms the edge element of the COPII outer coat. The tetramer self-assembles in multiple copies to form the complete polyhedral cage. Interacts (via WD 8) with SEC13. Interacts with PDCD6; interaction takes place in response to cytosolic calcium increase and leads to bridge together the BCR(KLHL12) complex and SEC31A, leading to monoubiquitination. Interacts with KLHL12. In terms of processing, monoubiquitinated by the BCR(KLHL12) E3 ubiquitin ligase complex, leading to regulate the size of COPII coats.

It localises to the cytoplasm. The protein localises to the cytoplasmic vesicle. The protein resides in the COPII-coated vesicle membrane. Its subcellular location is the endoplasmic reticulum membrane. In terms of biological role, component of the coat protein complex II (COPII) which promotes the formation of transport vesicles from the endoplasmic reticulum (ER). The coat has two main functions, the physical deformation of the endoplasmic reticulum membrane into vesicles and the selection of cargo molecules. The sequence is that of Protein transport protein Sec31A (SEC31A) from Pongo abelii (Sumatran orangutan).